The following is a 582-amino-acid chain: External alternative NAD(P)H-ubiquinone oxidoreductase B4, mitochondrial (582 aa).

Residues M1–S39 constitute a mitochondrion transit peptide. K65–R95 is an FAD binding site. L227–F263 contributes to the NAD(+) binding site. Residues R384 to R419 enclose the EF-hand domain. Positions 397, 401, 403, and 408 each coordinate Ca(2+). Positions F573 to I582 match the Microbody targeting signal motif.

The protein belongs to the NADH dehydrogenase family. The cofactor is FAD. Expressed in seedlings, roots, cotyledons, stems, buds and flowers and, to a lower extent, in stems and leaves.

The protein resides in the mitochondrion inner membrane. It is found in the peroxisome. It carries out the reaction a quinone + NADH + H(+) = a quinol + NAD(+). It catalyses the reaction a ubiquinone + NADH + H(+) = a ubiquinol + NAD(+). With respect to regulation, no effect of calcium ions on activity. In terms of biological role, alternative NADH-ubiquinone oxidoreductase which catalyzes the oxidation of mitochondrial NADH does not translocate protons across the inner mitochondrial membrane. NAD(P)H dehydrogenase; more efficient on NADH. The chain is External alternative NAD(P)H-ubiquinone oxidoreductase B4, mitochondrial (NDB4) from Arabidopsis thaliana (Mouse-ear cress).